The primary structure comprises 290 residues: Protease HtpX (290 aa).

2 consecutive transmembrane segments (helical) span residues 6 to 26 (LFLV…NILF) and 36 to 56 (ISGL…ISLL). His143 is a binding site for Zn(2+). The active site involves Glu144. Position 147 (His147) interacts with Zn(2+). The next 2 membrane-spanning stretches (helical) occupy residues 158-178 (LIQG…AGVI) and 200-220 (ITVF…VMWF). Glu225 is a binding site for Zn(2+).

Belongs to the peptidase M48B family. Zn(2+) is required as a cofactor.

The protein resides in the cell inner membrane. In Aeromonas hydrophila subsp. hydrophila (strain ATCC 7966 / DSM 30187 / BCRC 13018 / CCUG 14551 / JCM 1027 / KCTC 2358 / NCIMB 9240 / NCTC 8049), this protein is Protease HtpX.